The primary structure comprises 165 residues: Thiol peroxidase (165 aa).

Residues 18–165 (PQVGDNLAEF…DYDAALAALN (148 aa)) form the Thioredoxin domain. Cysteine 60 functions as the Cysteine sulfenic acid (-SOH) intermediate in the catalytic mechanism. Cysteine 60 and cysteine 94 are oxidised to a cystine.

It belongs to the peroxiredoxin family. Tpx subfamily. As to quaternary structure, homodimer.

The catalysed reaction is a hydroperoxide + [thioredoxin]-dithiol = an alcohol + [thioredoxin]-disulfide + H2O. Its function is as follows. Thiol-specific peroxidase that catalyzes the reduction of hydrogen peroxide and organic hydroperoxides to water and alcohols, respectively. Plays a role in cell protection against oxidative stress by detoxifying peroxides. The chain is Thiol peroxidase from Corynebacterium glutamicum (strain ATCC 13032 / DSM 20300 / JCM 1318 / BCRC 11384 / CCUG 27702 / LMG 3730 / NBRC 12168 / NCIMB 10025 / NRRL B-2784 / 534).